The sequence spans 199 residues: Fe/S biogenesis protein NfuA (199 aa).

[4Fe-4S] cluster is bound by residues Cys151 and Cys154.

It belongs to the NfuA family. Homodimer. The cofactor is [4Fe-4S] cluster.

Functionally, involved in iron-sulfur cluster biogenesis. Binds a 4Fe-4S cluster, can transfer this cluster to apoproteins, and thereby intervenes in the maturation of Fe/S proteins. Could also act as a scaffold/chaperone for damaged Fe/S proteins. This chain is Fe/S biogenesis protein NfuA, found in Xylella fastidiosa (strain 9a5c).